The following is a 258-amino-acid chain: E3 ubiquitin ligase TRIM40 (258 aa).

Residues 14–56 (CPICQESLKEAVSTNCGHLFCRVCLTQHVEKASASGVFCCPLC) form an RING-type zinc finger. A B box-type zinc finger spans residues 66–107 (GTGYICPNHQKRVCRFCEESRLLLCVECLVSPEHMSHHELTI). Zn(2+) is bound by residues cysteine 71, histidine 74, cysteine 93, and histidine 99. Residues 107 to 159 (IENALSHYKERLNRRSRKLRKDIAELQRLKAQQEKKLQALQFQVDHGNHRLEA) are a coiled coil.

Belongs to the TRIM/RBCC family. As to quaternary structure, interacts with NEDD8. As to expression, highly expressed in normal gastrointestinal epithelia but that is down-regulated in gastrointestinal carcinomas and chronic inflammatory lesions of the gastrointestinal tract.

The catalysed reaction is S-ubiquitinyl-[E2 ubiquitin-conjugating enzyme]-L-cysteine + [acceptor protein]-L-lysine = [E2 ubiquitin-conjugating enzyme]-L-cysteine + N(6)-ubiquitinyl-[acceptor protein]-L-lysine.. Its function is as follows. E3 ubiquitin-protein ligase that plays a role in the limitation of the innate immune response. Mediates inhibition of the RLR signaling pathway by ubiquitinating RIGI and IFIH1 receptors, leading to their proteasomal degradation. Also promotes the neddylation of IKBKG/NEMO, stabilizing NFKBIA, and thereby inhibiting of NF-kappa-B nuclear translocation and activation. The sequence is that of E3 ubiquitin ligase TRIM40 (TRIM40) from Homo sapiens (Human).